The following is a 332-amino-acid chain: MVFRSPLDLYSSHFLLPNFADSHHRSILLASSGGGNGAGGGGGAGGGSGGGNGAGGGGAGGAGGGGGGGSRAPPEELSMFQLPTLNFSPEQVASVCETLEETGDIERLGRFLWSLPVAPGACEAINKHESILRARAVVAFHTGNFRDLYHILENHKFTKESHGKLQAMWLEAHYQEAEKLRGRPLGPVDKYRVRKKFPLPRTIWDGEQKTHCFKERTRSLLREWYLQDPYPNPSKKRELAQATGLTPTQVGNWFKNRRQRDRAAAAKNRLQHQAIGPSGMRSLAEPGCPTHGSAESPSTAASPTTSVSSLTERADTGTSILSVTSSDSECDV.

The tract at residues 72-119 (APPEELSMFQLPTLNFSPEQVASVCETLEETGDIERLGRFLWSLPVAP) is interaction with TLE5. A DNA-binding region (homeobox) is located at residues 206 to 265 (GEQKTHCFKERTRSLLREWYLQDPYPNPSKKRELAQATGLTPTQVGNWFKNRRQRDRAAA). Residues 232–234 (NPS) form a bind to RHO promoter region. 2 disordered regions span residues 232 to 251 (NPSK…TQVG) and 258 to 332 (RQRD…ECDV). The segment covering 293–309 (SAESPSTAASPTTSVSS) has biased composition (low complexity). Positions 316-332 (TGTSILSVTSSDSECDV) are enriched in polar residues.

This sequence belongs to the SIX/Sine oculis homeobox family. In terms of assembly, interacts with EYA4; translocates EYA4 from the cytoplasm to the nucleus and promotes activation of their target genes. Interacts with MTA1 and HDAC2; represses its own transcription. Interacts with MTA1; facilitates the binding of SIX3 to the core DNA motif of SIX3 promoter. Interacts with EYA1; promotes EYA1 translocation to the nucleus. Interacts with TLE1 and TLE5 (via Q domain); can act in combination with either TLE1 and/or TLE5 leading to transcriptional repression or activation, respectively. Interacts (via homeobox) with NR4A3; differentially regulates the transcriptional activities NR4A3. Interacts with GMNN. Interacts with TLE4.

It is found in the nucleus. Its function is as follows. Transcriptional regulator which can act as both a transcriptional repressor and activator by binding a ATTA homeodomain core recognition sequence on these target genes. During forebrain development represses WNT1 expression allowing zona limitans intrathalamica formation and thereby ensuring proper anterio-posterior patterning of the diencephalon and formation of the rostral diencephalon. Acts as a direct upstream activator of SHH expression in the rostral diencephalon ventral midline and that in turn SHH maintains its expression. In addition, Six3 activity is required for the formation of the telencephalon. During postnatal stages of brain development is necessary for ependymal cell maturation by promoting the maturation of radial glia into ependymal cells through regulation of neuroblast proliferation and migration. Acts on the proliferation and differentiation of neural progenitor cells through activating transcription of CCND1 and CCND2. During early lens formation plays a role in lens induction and specification by activating directly PAX6 in the presumptive lens ectoderm. In turn PAX6 activates SIX3 resulting in activation of PDGFRA and CCND1 promoting cell proliferation. Also is required for the neuroretina development by directly suppressing WNT8B expression in the anterior neural plate territory. Its action during retina development and lens morphogenesis is TLE5 and TLE4-dependent manner. Furthermore, during eye development regulates several genes expression. Before and during early lens development represses the CRYGF promoter by binding a SIX repressor element. Directly activates RHO transcription, or cooperates with CRX or NRL. Six3 also functions in the formation of the proximodistal axis of the optic cup, and promotes the formation of optic vesicles-like structures. During pituitary development, acts in parallel or alternatively with HESX1 to control cell proliferation through Wnt/beta-catenin pathway. Plays a role in eye development by suppressing WNT1 expression and in dorsal-ventral patterning by repressing BMP signaling pathway. This chain is Homeobox protein SIX3 (SIX3), found in Homo sapiens (Human).